We begin with the raw amino-acid sequence, 256 residues long: Pimeloyl-[acyl-carrier protein] methyl ester esterase (256 aa).

One can recognise an AB hydrolase-1 domain in the interval 15–242; sequence HLVLLHGWGL…AAHAPFISHP (228 aa). Substrate-binding positions include W22, 82–83, and 143–147; these read SL and FLALQ. The Nucleophile role is filled by S82. Residues D207 and H235 contribute to the active site. Residue H235 coordinates substrate.

It belongs to the AB hydrolase superfamily. Carboxylesterase BioH family. Monomer.

It localises to the cytoplasm. It catalyses the reaction 6-carboxyhexanoyl-[ACP] methyl ester + H2O = 6-carboxyhexanoyl-[ACP] + methanol + H(+). The protein operates within cofactor biosynthesis; biotin biosynthesis. Its function is as follows. The physiological role of BioH is to remove the methyl group introduced by BioC when the pimeloyl moiety is complete. It allows to synthesize pimeloyl-ACP via the fatty acid synthetic pathway through the hydrolysis of the ester bonds of pimeloyl-ACP esters. This Escherichia coli O8 (strain IAI1) protein is Pimeloyl-[acyl-carrier protein] methyl ester esterase.